The primary structure comprises 310 residues: Phytoene synthase 2, chloroplastic (310 aa).

Residues Asp-1–Ala-25 constitute a chloroplast transit peptide.

This sequence belongs to the phytoene/squalene synthase family. As to quaternary structure, monomer.

The protein resides in the plastid. Its subcellular location is the chloroplast. The catalysed reaction is 2 (2E,6E,10E)-geranylgeranyl diphosphate = 15-cis-phytoene + 2 diphosphate. It functions in the pathway carotenoid biosynthesis; phytoene biosynthesis; all-trans-phytoene from geranylgeranyl diphosphate: step 1/1. Catalyzes the reaction from prephytoene diphosphate to phytoene. This Solanum lycopersicum (Tomato) protein is Phytoene synthase 2, chloroplastic (PSY2).